The sequence spans 308 residues: UDP-N-acetylenolpyruvoylglucosamine reductase (308 aa).

The FAD-binding PCMH-type domain occupies 30–213 (RVGGAAEWFI…KATTQSHLDH (184 aa)). Arginine 176 is an active-site residue. The active-site Proton donor is serine 227. Residue glutamate 297 is part of the active site.

Belongs to the MurB family. It depends on FAD as a cofactor.

The protein resides in the cytoplasm. It carries out the reaction UDP-N-acetyl-alpha-D-muramate + NADP(+) = UDP-N-acetyl-3-O-(1-carboxyvinyl)-alpha-D-glucosamine + NADPH + H(+). It functions in the pathway cell wall biogenesis; peptidoglycan biosynthesis. Its function is as follows. Cell wall formation. In Acaryochloris marina (strain MBIC 11017), this protein is UDP-N-acetylenolpyruvoylglucosamine reductase.